Here is a 282-residue protein sequence, read N- to C-terminus: Globin-related protein glb-13 (282 aa).

Residues 1 to 46 (MGQENSKCPHQSLAEKRYKVERPKTKKVSSGSATERCLSTQSDEKN) are disordered. The span at 13-23 (LAEKRYKVERP) shows a compositional bias: basic and acidic residues. Residues 28–41 (VSSGSATERCLSTQ) show a composition bias toward polar residues. In terms of domain architecture, Globin spans 100–249 (FLTRRERILL…IISFMRRGFD (150 aa)). His162 and His194 together coordinate heme b.

The protein belongs to the globin family.

Involved in oxidative stress resistance. This chain is Globin-related protein glb-13, found in Caenorhabditis elegans.